We begin with the raw amino-acid sequence, 200 residues long: Putative NAD(P)H nitroreductase Spy0809 (200 aa).

The cofactor is FMN.

This chain is Putative NAD(P)H nitroreductase Spy0809, found in Streptococcus pyogenes serotype M6 (strain ATCC BAA-946 / MGAS10394).